Here is a 381-residue protein sequence, read N- to C-terminus: Succinyl-diaminopimelate desuccinylase (381 aa).

Residue His-71 coordinates Zn(2+). The active site involves Asp-73. Asp-104 is a binding site for Zn(2+). Glu-138 (proton acceptor) is an active-site residue. Zn(2+)-binding residues include Glu-139, Glu-167, and His-353.

The protein belongs to the peptidase M20A family. DapE subfamily. Homodimer. The cofactor is Zn(2+). It depends on Co(2+) as a cofactor.

It carries out the reaction N-succinyl-(2S,6S)-2,6-diaminopimelate + H2O = (2S,6S)-2,6-diaminopimelate + succinate. Its pathway is amino-acid biosynthesis; L-lysine biosynthesis via DAP pathway; LL-2,6-diaminopimelate from (S)-tetrahydrodipicolinate (succinylase route): step 3/3. Its function is as follows. Catalyzes the hydrolysis of N-succinyl-L,L-diaminopimelic acid (SDAP), forming succinate and LL-2,6-diaminopimelate (DAP), an intermediate involved in the bacterial biosynthesis of lysine and meso-diaminopimelic acid, an essential component of bacterial cell walls. This is Succinyl-diaminopimelate desuccinylase from Shewanella piezotolerans (strain WP3 / JCM 13877).